The sequence spans 299 residues: Tyrosine recombinase XerD (299 aa).

One can recognise a Core-binding (CB) domain in the interval 2-89 (ETVNNNLQQF…AIRSFHQFLL (88 aa)). The Tyr recombinase domain maps to 110-293 (RLPKALTIEE…TKTRMRDVYA (184 aa)). Residues Arg150, Lys174, His245, Arg248, and His271 contribute to the active site. Catalysis depends on Tyr280, which acts as the O-(3'-phospho-DNA)-tyrosine intermediate.

Belongs to the 'phage' integrase family. XerD subfamily. As to quaternary structure, forms a cyclic heterotetrameric complex composed of two molecules of XerC and two molecules of XerD.

The protein resides in the cytoplasm. In terms of biological role, site-specific tyrosine recombinase, which acts by catalyzing the cutting and rejoining of the recombining DNA molecules. The XerC-XerD complex is essential to convert dimers of the bacterial chromosome into monomers to permit their segregation at cell division. It also contributes to the segregational stability of plasmids. This is Tyrosine recombinase XerD from Halalkalibacterium halodurans (strain ATCC BAA-125 / DSM 18197 / FERM 7344 / JCM 9153 / C-125) (Bacillus halodurans).